The sequence spans 99 residues: Protein dpy-30 homolog (99 aa).

Residue Met-1 is modified to N-acetylmethionine. The disordered stretch occupies residues 1 to 26 (MEPEQMLEGQTQVAENPHSEYGLTDN). Residue Ser-19 is modified to Phosphoserine. Lys-35 carries the post-translational modification N6-acetyllysine; alternate. Residue Lys-35 forms a Glycyl lysine isopeptide (Lys-Gly) (interchain with G-Cter in SUMO2); alternate linkage.

It belongs to the dpy-30 family. Homodimer. Core component of several methyltransferase-containing complexes including MLL1/MLL, MLL2/3 (also named ASCOM complex) and MLL4/WBP7. Each complex is at least composed of ASH2L, RBBP5, WDR5, DPY30, one or more specific histone methyltransferases (KMT2A/MLL1, KMT2D/MLL2, KMT2C/MLL3 and KMT2B/MLL4), and the facultative components MEN1, HCFC1, HCFC2, NCOA6, KDM6A, PAXIP1/PTIP, PAGR1 and alpha- and beta-tubulin. Interacts with ASH2L; the interaction is direct. Interacts with ARFGEF1. Component of the SET1 complex, at least composed of the catalytic subunit (SETD1A or SETD1B), WDR5, WDR82, RBBP5, ASH2L/ASH2, CXXC1/CFP1, HCFC1 and DPY30.

It localises to the nucleus. The protein resides in the golgi apparatus. Its subcellular location is the trans-Golgi network. In terms of biological role, as part of the MLL1/MLL complex, involved in the methylation of histone H3 at 'Lys-4', particularly trimethylation. Histone H3 'Lys-4' methylation represents a specific tag for epigenetic transcriptional activation. May play some role in histone H3 acetylation. In embryonic stem cells, may play a crucial role in retinoic acid-induced differentiation along the neural lineage, regulating gene induction and H3 'Lys-4' methylation at key developmental loci. May also play an indirect or direct role in endosomal transport. This Bos taurus (Bovine) protein is Protein dpy-30 homolog (DPY30).